Consider the following 195-residue polypeptide: Group XIIB secretory phospholipase A2-like protein (195 aa).

The N-terminal stretch at 1 to 19 is a signal peptide; the sequence is MKLLCGFFLLWLGLVGNLA. Residues serine 89, tyrosine 91, leucine 93, and aspartate 116 each coordinate Ca(2+).

The protein belongs to the phospholipase A2 family. Ca(2+) is required as a cofactor.

Its subcellular location is the secreted. Not known; does not seem to have catalytic activity. This Mus musculus (Mouse) protein is Group XIIB secretory phospholipase A2-like protein (Pla2g12b).